The following is a 156-amino-acid chain: ATP synthase subunit b (156 aa).

Residues 12–32 traverse the membrane as a helical segment; the sequence is IAFAIFVWFCVKYVWPPITAA.

It belongs to the ATPase B chain family. As to quaternary structure, F-type ATPases have 2 components, F(1) - the catalytic core - and F(0) - the membrane proton channel. F(1) has five subunits: alpha(3), beta(3), gamma(1), delta(1), epsilon(1). F(0) has three main subunits: a(1), b(2) and c(10-14). The alpha and beta chains form an alternating ring which encloses part of the gamma chain. F(1) is attached to F(0) by a central stalk formed by the gamma and epsilon chains, while a peripheral stalk is formed by the delta and b chains.

It is found in the cell inner membrane. F(1)F(0) ATP synthase produces ATP from ADP in the presence of a proton or sodium gradient. F-type ATPases consist of two structural domains, F(1) containing the extramembraneous catalytic core and F(0) containing the membrane proton channel, linked together by a central stalk and a peripheral stalk. During catalysis, ATP synthesis in the catalytic domain of F(1) is coupled via a rotary mechanism of the central stalk subunits to proton translocation. Functionally, component of the F(0) channel, it forms part of the peripheral stalk, linking F(1) to F(0). This chain is ATP synthase subunit b, found in Marinobacter nauticus (strain ATCC 700491 / DSM 11845 / VT8) (Marinobacter aquaeolei).